We begin with the raw amino-acid sequence, 207 residues long: FMN-dependent NADH:quinone oxidoreductase (207 aa).

FMN-binding positions include Ser-10, 16–18 (SIS), 96–99 (MYNL), and 141–144 (SRGG).

It belongs to the azoreductase type 1 family. As to quaternary structure, homodimer. FMN serves as cofactor.

The enzyme catalyses 2 a quinone + NADH + H(+) = 2 a 1,4-benzosemiquinone + NAD(+). The catalysed reaction is N,N-dimethyl-1,4-phenylenediamine + anthranilate + 2 NAD(+) = 2-(4-dimethylaminophenyl)diazenylbenzoate + 2 NADH + 2 H(+). Quinone reductase that provides resistance to thiol-specific stress caused by electrophilic quinones. Functionally, also exhibits azoreductase activity. Catalyzes the reductive cleavage of the azo bond in aromatic azo compounds to the corresponding amines. In Nostoc sp. (strain PCC 7120 / SAG 25.82 / UTEX 2576), this protein is FMN-dependent NADH:quinone oxidoreductase.